The following is a 244-amino-acid chain: Protein-lysine methyltransferase METTL21E (244 aa).

The tract at residues 1–20 is disordered; the sequence is MDLTVTHITHKETYKEPRDD. The span at 9-18 shows a compositional bias: basic and acidic residues; that stretch reads THKETYKEPR. S-adenosyl-L-methionine is bound by residues tryptophan 69, 97–99, aspartate 118, tryptophan 149, and alanine 170; that span reads GAG.

The protein belongs to the methyltransferase superfamily. METTL21 family.

Protein-lysine methyltransferase. The protein is Protein-lysine methyltransferase METTL21E (Mettl21e) of Mus musculus (Mouse).